Here is a 336-residue protein sequence, read N- to C-terminus: tRNA N6-adenosine threonylcarbamoyltransferase (336 aa).

His-114 and His-118 together coordinate Fe cation. Residues 136–140, Asp-169, Gly-182, Asp-186, and Asn-275 each bind substrate; that span reads LVSGG. Residue Asp-302 participates in Fe cation binding.

It belongs to the KAE1 / TsaD family. The cofactor is Fe(2+).

The protein localises to the cytoplasm. It carries out the reaction L-threonylcarbamoyladenylate + adenosine(37) in tRNA = N(6)-L-threonylcarbamoyladenosine(37) in tRNA + AMP + H(+). Required for the formation of a threonylcarbamoyl group on adenosine at position 37 (t(6)A37) in tRNAs that read codons beginning with adenine. Is involved in the transfer of the threonylcarbamoyl moiety of threonylcarbamoyl-AMP (TC-AMP) to the N6 group of A37, together with TsaE and TsaB. TsaD likely plays a direct catalytic role in this reaction. The chain is tRNA N6-adenosine threonylcarbamoyltransferase from Streptococcus agalactiae serotype Ia (strain ATCC 27591 / A909 / CDC SS700).